A 325-amino-acid polypeptide reads, in one-letter code: Elongation factor Ts, mitochondrial (325 aa).

Residues 1–45 (MSLLRSLRVFLVARTGSYPAGSLLRQSPQPRHTFYAGPRLSASAS) constitute a mitochondrion transit peptide. N6-succinyllysine occurs at positions 76, 133, and 192. At serine 270 the chain carries Phosphoserine. Position 324 is a phosphothreonine (threonine 324).

It belongs to the EF-Ts family. Expressed in all tissues, with the highest levels of expression in skeletal muscle, liver and kidney.

Its subcellular location is the mitochondrion. Functionally, associates with the EF-Tu.GDP complex and induces the exchange of GDP to GTP. It remains bound to the aminoacyl-tRNA.EF-Tu.GTP complex up to the GTP hydrolysis stage on the ribosome. The protein is Elongation factor Ts, mitochondrial of Homo sapiens (Human).